Here is a 353-residue protein sequence, read N- to C-terminus: Chloroplastic lipocalin (353 aa).

Low complexity predominate over residues 1–18; the sequence is MILLSSSISLSRPVSSQS. Residues 1–27 form a disordered region; sequence MILLSSSISLSRPVSSQSFSPPAATST. Residues 1 to 39 constitute a chloroplast transit peptide; the sequence is MILLSSSISLSRPVSSQSFSPPAATSTRRSHSSVTVKCC. A disulfide bond links C163 and C299.

It belongs to the calycin superfamily. Lipocalin family. As to expression, expressed in leaves at low levels (at protein levels). Present in seeds.

The protein localises to the plastid. It localises to the chloroplast thylakoid lumen. Functionally, lipocalin that prevents thylakoidal membrane lipids peroxidation and confers protection against oxidative stress, especially mediated by singlet oxygen in response to high light and other stress (e.g. heat shocks). Required for seed longevity by ensuring polyunsaturated lipids integrity. This is Chloroplastic lipocalin from Arabidopsis thaliana (Mouse-ear cress).